The sequence spans 292 residues: Homoserine kinase (292 aa).

Residue 84–94 coordinates ATP; that stretch reads PFSRGLGSSSA.

The protein belongs to the GHMP kinase family. Homoserine kinase subfamily.

It localises to the cytoplasm. The catalysed reaction is L-homoserine + ATP = O-phospho-L-homoserine + ADP + H(+). The protein operates within amino-acid biosynthesis; L-threonine biosynthesis; L-threonine from L-aspartate: step 4/5. In terms of biological role, catalyzes the ATP-dependent phosphorylation of L-homoserine to L-homoserine phosphate. The chain is Homoserine kinase from Campylobacter hominis (strain ATCC BAA-381 / DSM 21671 / CCUG 45161 / LMG 19568 / NCTC 13146 / CH001A).